We begin with the raw amino-acid sequence, 289 residues long: MDSVKIALQYIMPKHLVSRLVGKFAAAKAGALTQAFINWFIKQYKVDMSEAAQSDPKAYASFNDFFTRALKDGIRPLCQEDGIMVHPVDGAVSQRGPIEAGQIVQAKGHHYSSVALLGGDEKDAARFDNGDFATIYLAPKDYHRIHMPITGTLSKMIYVPGELFSVNPLTAQNVPGLFARNERVVAIFETQVGPLAMVLVGATIVASIETVWAGTVTPPAGKQVFTWEYPTTGSDALTLEKGAEMGRFKLGSTVVMLFAQDAIDTFAAGVDPGETTRMGQKFANLNKSK.

Residues D89, H146, and S252 each act as charge relay system; for autoendoproteolytic cleavage activity in the active site. S252 acts as the Schiff-base intermediate with substrate; via pyruvic acid; for decarboxylase activity in catalysis. S252 carries the post-translational modification Pyruvic acid (Ser); by autocatalysis.

It belongs to the phosphatidylserine decarboxylase family. PSD-B subfamily. Prokaryotic type I sub-subfamily. Heterodimer of a large membrane-associated beta subunit and a small pyruvoyl-containing alpha subunit. It depends on pyruvate as a cofactor. In terms of processing, is synthesized initially as an inactive proenzyme. Formation of the active enzyme involves a self-maturation process in which the active site pyruvoyl group is generated from an internal serine residue via an autocatalytic post-translational modification. Two non-identical subunits are generated from the proenzyme in this reaction, and the pyruvate is formed at the N-terminus of the alpha chain, which is derived from the carboxyl end of the proenzyme. The autoendoproteolytic cleavage occurs by a canonical serine protease mechanism, in which the side chain hydroxyl group of the serine supplies its oxygen atom to form the C-terminus of the beta chain, while the remainder of the serine residue undergoes an oxidative deamination to produce ammonia and the pyruvoyl prosthetic group on the alpha chain. During this reaction, the Ser that is part of the protease active site of the proenzyme becomes the pyruvoyl prosthetic group, which constitutes an essential element of the active site of the mature decarboxylase.

It is found in the cell membrane. The enzyme catalyses a 1,2-diacyl-sn-glycero-3-phospho-L-serine + H(+) = a 1,2-diacyl-sn-glycero-3-phosphoethanolamine + CO2. Its pathway is phospholipid metabolism; phosphatidylethanolamine biosynthesis; phosphatidylethanolamine from CDP-diacylglycerol: step 2/2. Its function is as follows. Catalyzes the formation of phosphatidylethanolamine (PtdEtn) from phosphatidylserine (PtdSer). The protein is Phosphatidylserine decarboxylase proenzyme of Shewanella denitrificans (strain OS217 / ATCC BAA-1090 / DSM 15013).